The chain runs to 196 residues: Ribosomal RNA small subunit methyltransferase G (196 aa).

S-adenosyl-L-methionine-binding positions include Gly77, Phe82, 127-128, and Arg140; that span reads AE.

This sequence belongs to the methyltransferase superfamily. RNA methyltransferase RsmG family.

The protein resides in the cytoplasm. Functionally, specifically methylates the N7 position of a guanine in 16S rRNA. The chain is Ribosomal RNA small subunit methyltransferase G from Aquifex aeolicus (strain VF5).